The chain runs to 807 residues: PGC-1 and ERR-induced regulator in muscle protein 1 (807 aa).

Disordered regions lie at residues 29–80 (QADL…EDVA), 121–391 (CPGQ…TPAS), and 517–548 (PSHEDSGSGEPTGSPFLTPEQPPVPRTAAGSR). Composition is skewed to low complexity over residues 40–52 (SSDIDQGDSSGSS) and 145–160 (PAPSSPSKAPHSPESP). Residues 162–171 (HSDNPQSSPD) show a composition bias toward polar residues. A compositionally biased stretch (basic residues) spans 180 to 194 (PGRKKRRAVGAKGTK). Composition is skewed to polar residues over residues 195–211 (HSGSLDSAATQMSSPQL), 311–346 (KPQSDIASSTHPFTPDVSLSTLAFKCQPNTNQSTPA), and 363–391 (ALSTPASEPDTALSTPASEPDTALSTPAS). Position 198 is a phosphoserine (Ser-198). The residue at position 534 (Thr-534) is a Phosphothreonine. Position 548 is an omega-N-methylarginine (Arg-548).

Highly expressed in skeletal muscles and heart with lower levels in brown adipose tissue (at protein level). Muscle-specific expression is increased by endurance exercise.

Its subcellular location is the cytoplasm. The protein resides in the nucleus. In terms of biological role, regulates the expression of selective PPARGC1A/B and ESRRA/B/G target genes with roles in glucose and lipid metabolism, energy transfer, contractile function, muscle mitochondrial biogenesis and oxidative capacity. Required for the efficient induction of MT-CO2, MT-CO3, COX4I1, TFB1M, TFB2M, POLRMT and SIRT3 by PPARGC1A. Positively regulates the PPARGC1A/ESRRG-induced expression of CKMT2, TNNI3 and SLC2A4 and negatively regulates the PPARGC1A/ESRRG-induced expression of PDK4. The sequence is that of PGC-1 and ERR-induced regulator in muscle protein 1 (Perm1) from Mus musculus (Mouse).